Reading from the N-terminus, the 366-residue chain is MQYINIANRGVKSLSPYQAGKPIEELERELGISNIVKLASNENPFGFPESAKKAIFEQLDKLTRYPDANGFELKQTIAKKFGVQPNQITLGNGSNDLLELFAHTFATEGDEIMYSQYAFIVYPLVTKAINAIVKEIPAKNWGHDLQGFLTALSDKTKLIYIANPNNPTGNFLTSQEIEDFLAEVPENVIVVLDEAYTEFTRSEERVDSFSLLKKYSNLIISRSLSKAYGLAGLRIGYAVSNPEIADLLNRVRQPFNCNSLALTAAVAVMNDDKFVEKVAENNRIEMRRYEDFCQKNQLDYIPSKGNFITIDFKQPAAPIYDALLREGVIVRPIAGYGMPNHLRISIGLPEENDKFFTALSKVLKFA.

Lysine 226 carries the post-translational modification N6-(pyridoxal phosphate)lysine.

It belongs to the class-II pyridoxal-phosphate-dependent aminotransferase family. Histidinol-phosphate aminotransferase subfamily. As to quaternary structure, homodimer. Pyridoxal 5'-phosphate is required as a cofactor.

The enzyme catalyses L-histidinol phosphate + 2-oxoglutarate = 3-(imidazol-4-yl)-2-oxopropyl phosphate + L-glutamate. It participates in amino-acid biosynthesis; L-histidine biosynthesis; L-histidine from 5-phospho-alpha-D-ribose 1-diphosphate: step 7/9. This chain is Histidinol-phosphate aminotransferase 2 (hisC2), found in Haemophilus influenzae (strain ATCC 51907 / DSM 11121 / KW20 / Rd).